The primary structure comprises 3075 residues: Probable polyketide synthase 30 (3075 aa).

In terms of domain architecture, Ketosynthase family 3 (KS3) spans 26-458; that stretch reads SGDVAVIGIG…GSNVCLILSE (433 aa). Catalysis depends on for beta-ketoacyl synthase activity residues C198, H337, and H381. The segment at 663–696 is acyl/malonyl transferase; that stretch reads GVSADIIIGHSLGEVSSPYCSGMIDFQTLCYLTY. S673 acts as the For acyl/malonyl transferase activity in catalysis. Positions 963 to 1085 are N-terminal hotdog fold; the sequence is GPSINNLGNN…GNFSLTKHNS (123 aa). Residues 963-1269 form the PKS/mFAS DH domain; sequence GPSINNLGNN…CALVSLGSNP (307 aa). Catalysis depends on H997, which acts as the Proton acceptor; for dehydratase activity. A C-terminal hotdog fold region spans residues 1102–1269; sequence NFTSMSKQDF…CALVSLGSNP (168 aa). D1174 (proton donor; for dehydratase activity) is an active-site residue. The 78-residue stretch at 2533–2610 folds into the Carrier domain; that stretch reads DNNEIIRSTI…QSIEIIKSAH (78 aa). S2570 is modified (O-(pantetheine 4'-phosphoryl)serine).

Requires pantetheine 4'-phosphate as cofactor.

Probable polyketide synthase. May be involved in the process of cell migration. The polypeptide is Probable polyketide synthase 30 (pks30) (Dictyostelium discoideum (Social amoeba)).